The primary structure comprises 567 residues: Urease subunit alpha (567 aa).

A Urease domain is found at 129–567; the sequence is GGIDTHIHWI…LPMAQRYFLF (439 aa). The Ni(2+) site is built by His134, His136, and Lys217. Lys217 bears the N6-carboxylysine mark. His219 contacts substrate. 2 residues coordinate Ni(2+): His246 and His272. The active-site Proton donor is the His320. Asp360 contacts Ni(2+).

Belongs to the metallo-dependent hydrolases superfamily. Urease alpha subunit family. As to quaternary structure, heterotrimer of UreA (gamma), UreB (beta) and UreC (alpha) subunits. Three heterotrimers associate to form the active enzyme. The apoenzyme interacts with an accessory complex composed of UreD, UreF and UreG, which is required for the assembly of the nickel containing metallocenter of UreC. The UreE protein may also play a direct role as a metallochaperone in nickel transfer to the urease apoprotein. Ni cation serves as cofactor. Post-translationally, carboxylation allows a single lysine to coordinate two nickel ions.

The protein localises to the cytoplasm. The enzyme catalyses urea + 2 H2O + H(+) = hydrogencarbonate + 2 NH4(+). It participates in nitrogen metabolism; urea degradation; CO(2) and NH(3) from urea (urease route): step 1/1. Its activity is regulated as follows. The apoenzyme can be activated in vitro in the presence of nickel ions and carbon dioxide, which promotes carboxylation of Lys-217. The protein is Urease subunit alpha of Klebsiella aerogenes (Enterobacter aerogenes).